A 283-amino-acid polypeptide reads, in one-letter code: Pantothenate synthetase (283 aa).

Position 31–38 (31–38 (MGALHEGH)) interacts with ATP. Residue His-38 is the Proton donor of the active site. Gln-62 is a binding site for (R)-pantoate. Beta-alanine is bound at residue Gln-62. 148–151 (GKKD) is a binding site for ATP. Gln-154 contacts (R)-pantoate. Residues Val-177 and 185-188 (RSSR) contribute to the ATP site.

It belongs to the pantothenate synthetase family. Homodimer.

Its subcellular location is the cytoplasm. It catalyses the reaction (R)-pantoate + beta-alanine + ATP = (R)-pantothenate + AMP + diphosphate + H(+). It participates in cofactor biosynthesis; (R)-pantothenate biosynthesis; (R)-pantothenate from (R)-pantoate and beta-alanine: step 1/1. In terms of biological role, catalyzes the condensation of pantoate with beta-alanine in an ATP-dependent reaction via a pantoyl-adenylate intermediate. The sequence is that of Pantothenate synthetase from Staphylococcus haemolyticus (strain JCSC1435).